We begin with the raw amino-acid sequence, 505 residues long: 2,3-bisphosphoglycerate-independent phosphoglycerate mutase (505 aa).

Asp-11 and Ser-61 together coordinate Mn(2+). Ser-61 serves as the catalytic Phosphoserine intermediate. Substrate contacts are provided by residues His-122, 152–153 (RD), Arg-183, Arg-189, 259–262 (RTDR), and Lys-332. Residues Asp-399, His-403, Asp-440, His-441, and His-458 each contribute to the Mn(2+) site.

The protein belongs to the BPG-independent phosphoglycerate mutase family. As to quaternary structure, monomer. Mn(2+) serves as cofactor.

It carries out the reaction (2R)-2-phosphoglycerate = (2R)-3-phosphoglycerate. It participates in carbohydrate degradation; glycolysis; pyruvate from D-glyceraldehyde 3-phosphate: step 3/5. Functionally, catalyzes the interconversion of 2-phosphoglycerate and 3-phosphoglycerate. The polypeptide is 2,3-bisphosphoglycerate-independent phosphoglycerate mutase (Flavobacterium johnsoniae (strain ATCC 17061 / DSM 2064 / JCM 8514 / BCRC 14874 / CCUG 350202 / NBRC 14942 / NCIMB 11054 / UW101) (Cytophaga johnsonae)).